The chain runs to 390 residues: Cold-responsive protein kinase 1 (390 aa).

Residues 41-320 (FSAENKIGEG…VRLLTGEKDI (280 aa)) enclose the Protein kinase domain. ATP-binding positions include 47–55 (IGEGGFGSV) and Lys-69. Residue Tyr-114 is modified to Phosphotyrosine. Asp-169 serves as the catalytic Proton acceptor. 2 positions are modified to phosphoserine: Ser-173 and Ser-202. Phosphothreonine occurs at positions 203 and 208. A Phosphotyrosine modification is found at Tyr-216. Residues 345 to 390 (TKTEQVNRQNYTNPSSSSNGSSRDHSNAYSSGASSANAGNTFSSTI) form a disordered region. The span at 354-390 (NYTNPSSSSNGSSRDHSNAYSSGASSANAGNTFSSTI) shows a compositional bias: low complexity.

The protein belongs to the protein kinase superfamily. Ser/Thr protein kinase family. In terms of assembly, interacts with and phosphorylates 14-3-3 proteins. Binds to GRF6 at the plasma membrane. Autophosphorylated.

The protein resides in the cell membrane. It carries out the reaction L-seryl-[protein] + ATP = O-phospho-L-seryl-[protein] + ADP + H(+). It catalyses the reaction L-threonyl-[protein] + ATP = O-phospho-L-threonyl-[protein] + ADP + H(+). With respect to regulation, activated by cold. Its function is as follows. Negative regulator of freezing tolerance that phosphorylates 14-3-3 proteins (e.g. GRF6) thus triggering their translocation from the cytosol to the nucleus in response to cold stress. The chain is Cold-responsive protein kinase 1 from Arabidopsis thaliana (Mouse-ear cress).